Consider the following 370-residue polypeptide: Cobalt-precorrin-5B C(1)-methyltransferase (370 aa).

The protein belongs to the CbiD family.

It catalyses the reaction Co-precorrin-5B + S-adenosyl-L-methionine = Co-precorrin-6A + S-adenosyl-L-homocysteine. Its pathway is cofactor biosynthesis; adenosylcobalamin biosynthesis; cob(II)yrinate a,c-diamide from sirohydrochlorin (anaerobic route): step 6/10. In terms of biological role, catalyzes the methylation of C-1 in cobalt-precorrin-5B to form cobalt-precorrin-6A. The sequence is that of Cobalt-precorrin-5B C(1)-methyltransferase from Trichormus variabilis (strain ATCC 29413 / PCC 7937) (Anabaena variabilis).